The chain runs to 798 residues: Palmitoyl thioesterase CPT1C (798 aa).

The Cytoplasmic segment spans residues 1-52 (MAEAHQASSLLSSLSSDGAEVELSSPVWQEIYLCALRSWKRHLWRVWNDFLA). Residues 53 to 75 (GVVPATPLSWLFLFSTIQLACLL) form a helical membrane-spanning segment. Residues 76 to 103 (QLDPSLGLMEKIKELLPDWGGQHHQLQG) are Lumenal-facing. The helical transmembrane segment at 104 to 126 (FLSAAVFASCLWGALIFTLHVAL) threads the bilayer. Residues 127 to 798 (RLLLSHHGWL…PNTPTSSTNL (672 aa)) lie on the Cytoplasmic side of the membrane. Catalysis depends on His469, which acts as the Proton acceptor. A CoA-binding site is contributed by 551 to 563 (GKSFIKCCHVSSD). The (R)-carnitine site is built by Tyr585, Ser587, and Thr598. A required for interaction with GRIA1 region spans residues 759–798 (LFRVGQHFKRQFRGENSDYRYNFLSCKTVDPNTPTSSTNL).

The protein belongs to the carnitine/choline acetyltransferase family. As to quaternary structure, peripherally associated with AMPAR complex. AMPAR complex consists of an inner core made of 4 pore-forming GluA/GRIA proteins (GRIA1, GRIA2, GRIA3 and GRIA4) and 4 major auxiliary subunits arranged in a twofold symmetry. One of the two pairs of distinct binding sites is occupied either by CNIH2, CNIH3 or CACNG2, CACNG3. The other harbors CACNG2, CACNG3, CACNG4, CACNG8 or GSG1L. This inner core of AMPAR complex is complemented by outer core constituents binding directly to the GluA/GRIA proteins at sites distinct from the interaction sites of the inner core constituents. Outer core constituents include at least PRRT1, PRRT2, CKAMP44/SHISA9, FRRS1L and NRN1. The proteins of the inner and outer core serve as a platform for other, more peripherally associated AMPAR constituents, including CPT1C. Alone or in combination, these auxiliary subunits control the gating and pharmacology of the AMPAR complex and profoundly impact their biogenesis and protein processing. Interacts with SACM1L; the interaction regulates SACM1L phosphatidylinositol-3-phosphatase activity and translocation to endoplasmic reticulum/trans Golgi network in a malonyl-CoA dependent manner. Interacts with ATL1. As to expression, predominantly expressed in brain (at protein level) and testis, highly expressed in the hippocampus, amygdala and cerebellum. Expressed in neurons but not astrocytes. Expressed in the ventral horn from spinal cords.

It is found in the synapse. Its subcellular location is the cell projection. The protein resides in the axon. The protein localises to the dendrite. It localises to the dendritic spine. It is found in the endoplasmic reticulum membrane. It carries out the reaction S-hexadecanoyl-L-cysteinyl-[protein] + H2O = L-cysteinyl-[protein] + hexadecanoate + H(+). Its function is as follows. Palmitoyl thioesterase specifically expressed in the endoplasmic reticulum of neurons. Modulates the trafficking of the glutamate receptor, AMPAR, to plasma membrane through depalmitoylation of GRIA1. Also regulates AMPR trafficking through the regulation of SACM1L phosphatidylinositol-3-phosphatase activity by interaction in a malonyl-CoA dependent manner. Binds malonyl-CoA and couples malonyl-CoA to ceramide levels, necessary for proper spine maturation and contributing to systemic energy homeostasis and appetite control. Binds to palmitoyl-CoA, but does not have carnitine palmitoyltransferase 1 catalytic activity or at very low levels. The sequence is that of Palmitoyl thioesterase CPT1C (Cpt1c) from Mus musculus (Mouse).